The following is a 70-amino-acid chain: Small ribosomal subunit protein bS21 (70 aa).

Belongs to the bacterial ribosomal protein bS21 family.

The protein is Small ribosomal subunit protein bS21 of Bordetella avium (strain 197N).